Consider the following 296-residue polypeptide: Formamidopyrimidine-DNA glycosylase (296 aa).

Proline 2 functions as the Schiff-base intermediate with DNA in the catalytic mechanism. The Proton donor role is filled by glutamate 3. Lysine 58 serves as the catalytic Proton donor; for beta-elimination activity. DNA contacts are provided by histidine 104, arginine 126, and lysine 169. The FPG-type zinc finger occupies 260–296 (SVYDRESQACRTPGCGGTVARIVQAGRSTFYCATCQK). Arginine 286 serves as the catalytic Proton donor; for delta-elimination activity.

It belongs to the FPG family. Monomer. Requires Zn(2+) as cofactor.

It catalyses the reaction Hydrolysis of DNA containing ring-opened 7-methylguanine residues, releasing 2,6-diamino-4-hydroxy-5-(N-methyl)formamidopyrimidine.. The catalysed reaction is 2'-deoxyribonucleotide-(2'-deoxyribose 5'-phosphate)-2'-deoxyribonucleotide-DNA = a 3'-end 2'-deoxyribonucleotide-(2,3-dehydro-2,3-deoxyribose 5'-phosphate)-DNA + a 5'-end 5'-phospho-2'-deoxyribonucleoside-DNA + H(+). Functionally, involved in base excision repair of DNA damaged by oxidation or by mutagenic agents. Acts as a DNA glycosylase that recognizes and removes damaged bases. Has a preference for oxidized purines, such as 7,8-dihydro-8-oxoguanine (8-oxoG). Has AP (apurinic/apyrimidinic) lyase activity and introduces nicks in the DNA strand. Cleaves the DNA backbone by beta-delta elimination to generate a single-strand break at the site of the removed base with both 3'- and 5'-phosphates. The protein is Formamidopyrimidine-DNA glycosylase of Rhizobium johnstonii (strain DSM 114642 / LMG 32736 / 3841) (Rhizobium leguminosarum bv. viciae).